We begin with the raw amino-acid sequence, 111 residues long: Cytochrome c-550 (111 aa).

The heme c site is built by C13, C16, H17, and M90.

In terms of processing, binds 1 heme c group covalently per subunit.

The chain is Cytochrome c-550 from Novispirillum itersonii (Aquaspirillum itersonii).